Consider the following 62-residue polypeptide: Temporin-HN1 (62 aa).

Positions methionine 1–serine 22 are cleaved as a signal peptide. Positions glutamate 23 to glutamate 44 are excised as a propeptide. At leucine 60 the chain carries Leucine amide.

Expressed by the skin glands.

The protein localises to the secreted. Functionally, has antimicrobial activity against some Gram-positive bacteria and fungi but has no activity against a range of Gram-negative bacteria except P.faecalis. Active against the Gram-positive bacteria S.aureus ATCC 25923 (MIC=37.5 uM), S.carnosus KHS (MIC=37.5 uM), B.licheniformis X39 (MIC=19 uM), R.rhodochrous X15 (MIC=4.8 uM), is virtually inactive against E.faecalis 981 (MIC=150 uM) and inactive against E.faecium 091299. Has some antimicrobial activity against the Gram-negative bacterium P.faecalis X29 (MIC=75 uM) and is inactive against E.coli, P.aeruginosa and S.typhi. Has antifungal activity against C.albicans ATCC 2002 (MIC=19 uM) and lower activity against the slime mold 090223 (MIC=75 uM). Has low hemolytic activity against human erythrocytes (LC(50)=75 uM). The chain is Temporin-HN1 from Odorrana hainanensis (Odor frog).